The primary structure comprises 287 residues: Acetyl-coenzyme A carboxylase carboxyl transferase subunit beta (287 aa).

Residues M36–H287 enclose the CoA carboxyltransferase N-terminal domain. Positions 40, 43, 59, and 62 each coordinate Zn(2+). The C4-type zinc-finger motif lies at C40 to C62.

Belongs to the AccD/PCCB family. As to quaternary structure, acetyl-CoA carboxylase is a heterohexamer composed of biotin carboxyl carrier protein (AccB), biotin carboxylase (AccC) and two subunits each of ACCase subunit alpha (AccA) and ACCase subunit beta (AccD). Zn(2+) is required as a cofactor.

It localises to the cytoplasm. It carries out the reaction N(6)-carboxybiotinyl-L-lysyl-[protein] + acetyl-CoA = N(6)-biotinyl-L-lysyl-[protein] + malonyl-CoA. It participates in lipid metabolism; malonyl-CoA biosynthesis; malonyl-CoA from acetyl-CoA: step 1/1. Component of the acetyl coenzyme A carboxylase (ACC) complex. Biotin carboxylase (BC) catalyzes the carboxylation of biotin on its carrier protein (BCCP) and then the CO(2) group is transferred by the transcarboxylase to acetyl-CoA to form malonyl-CoA. This is Acetyl-coenzyme A carboxylase carboxyl transferase subunit beta from Clostridium novyi (strain NT).